Consider the following 237-residue polypeptide: Phosphoribosylaminoimidazole-succinocarboxamide synthase (237 aa).

Belongs to the SAICAR synthetase family.

The catalysed reaction is 5-amino-1-(5-phospho-D-ribosyl)imidazole-4-carboxylate + L-aspartate + ATP = (2S)-2-[5-amino-1-(5-phospho-beta-D-ribosyl)imidazole-4-carboxamido]succinate + ADP + phosphate + 2 H(+). It participates in purine metabolism; IMP biosynthesis via de novo pathway; 5-amino-1-(5-phospho-D-ribosyl)imidazole-4-carboxamide from 5-amino-1-(5-phospho-D-ribosyl)imidazole-4-carboxylate: step 1/2. The sequence is that of Phosphoribosylaminoimidazole-succinocarboxamide synthase from Pseudomonas fluorescens (strain SBW25).